We begin with the raw amino-acid sequence, 596 residues long: Alkaline phosphatase 4 (596 aa).

An N-terminal signal peptide occupies residues 1-20 (MHCLVILGFLLGSLVAFSWA). Aspartate 93 lines the Mg(2+) pocket. A Zn(2+)-binding site is contributed by aspartate 93. The Phosphoserine intermediate role is filled by serine 144. 2 residues coordinate Mg(2+): histidine 202 and threonine 204. N-linked (GlcNAc...) asparagine glycosylation is found at asparagine 262 and asparagine 297. Glutamate 369 serves as a coordination point for Mg(2+). Residues aspartate 374 and histidine 378 each contribute to the Zn(2+) site. N-linked (GlcNAc...) asparagine glycosylation occurs at asparagine 401. Zn(2+) is bound by residues aspartate 415 and histidine 416. Asparagine 464 and asparagine 470 each carry an N-linked (GlcNAc...) asparagine glycan. Histidine 504 provides a ligand contact to Zn(2+). A disulfide bond links cysteine 539 and cysteine 550. Residues 548–566 (DSCEDHKDGQKDRPLDKPN) show a composition bias toward basic and acidic residues. Positions 548–570 (DSCEDHKDGQKDRPLDKPNPKRN) are disordered. Asparagine 570 carries GPI-anchor amidated asparagine lipidation. The helical transmembrane segment at 571-591 (GATVVGASLIPILTAATAAIL) threads the bilayer. A propeptide spans 571–596 (GATVVGASLIPILTAATAAILRGRGL) (removed in mature form).

This sequence belongs to the alkaline phosphatase family. As to quaternary structure, homodimer. Mg(2+) is required as a cofactor. The cofactor is Zn(2+). As to expression, ellipsoid body ring neurons in the adult brain and in the lower Malpighian tubule and ureter.

The protein resides in the cell membrane. The catalysed reaction is a phosphate monoester + H2O = an alcohol + phosphate. In terms of biological role, important role in neural and renal epithelial function. This chain is Alkaline phosphatase 4, found in Drosophila melanogaster (Fruit fly).